The sequence spans 239 residues: 7-cyano-7-deazaguanine synthase (239 aa).

Position 8–18 (8–18) interacts with ATP; the sequence is LSGGLDSPTVL. Positions 188, 196, 199, and 202 each coordinate Zn(2+).

This sequence belongs to the QueC family. Zn(2+) serves as cofactor.

It catalyses the reaction 7-carboxy-7-deazaguanine + NH4(+) + ATP = 7-cyano-7-deazaguanine + ADP + phosphate + H2O + H(+). Its pathway is purine metabolism; 7-cyano-7-deazaguanine biosynthesis. Its function is as follows. Catalyzes the ATP-dependent conversion of 7-carboxy-7-deazaguanine (CDG) to 7-cyano-7-deazaguanine (preQ(0)). This Picrophilus torridus (strain ATCC 700027 / DSM 9790 / JCM 10055 / NBRC 100828 / KAW 2/3) protein is 7-cyano-7-deazaguanine synthase.